The chain runs to 256 residues: Ubiquinone/menaquinone biosynthesis C-methyltransferase UbiE (256 aa).

S-adenosyl-L-methionine-binding positions include threonine 79, aspartate 100, and 128-129; that span reads DA.

The protein belongs to the class I-like SAM-binding methyltransferase superfamily. MenG/UbiE family.

The catalysed reaction is a 2-demethylmenaquinol + S-adenosyl-L-methionine = a menaquinol + S-adenosyl-L-homocysteine + H(+). It catalyses the reaction a 2-methoxy-6-(all-trans-polyprenyl)benzene-1,4-diol + S-adenosyl-L-methionine = a 5-methoxy-2-methyl-3-(all-trans-polyprenyl)benzene-1,4-diol + S-adenosyl-L-homocysteine + H(+). The protein operates within quinol/quinone metabolism; menaquinone biosynthesis; menaquinol from 1,4-dihydroxy-2-naphthoate: step 2/2. It participates in cofactor biosynthesis; ubiquinone biosynthesis. In terms of biological role, methyltransferase required for the conversion of demethylmenaquinol (DMKH2) to menaquinol (MKH2) and the conversion of 2-polyprenyl-6-methoxy-1,4-benzoquinol (DDMQH2) to 2-polyprenyl-3-methyl-6-methoxy-1,4-benzoquinol (DMQH2). This chain is Ubiquinone/menaquinone biosynthesis C-methyltransferase UbiE, found in Pseudomonas paraeruginosa (strain DSM 24068 / PA7) (Pseudomonas aeruginosa (strain PA7)).